Reading from the N-terminus, the 117-residue chain is MNNIIKMLNEEQMKKDVPEFGAGDTVVVKVRVVEGGKERLQAFEGVVIAKRNRGVHSAFTVRKISNGEGVERAFQTHSPIISDIEVKRRGRVRRAKLYYLRERSGKSARIREKLSTK.

This sequence belongs to the bacterial ribosomal protein bL19 family.

In terms of biological role, this protein is located at the 30S-50S ribosomal subunit interface and may play a role in the structure and function of the aminoacyl-tRNA binding site. In Shewanella woodyi (strain ATCC 51908 / MS32), this protein is Large ribosomal subunit protein bL19.